Here is a 562-residue protein sequence, read N- to C-terminus: Putative transport protein YPA_0617 (562 aa).

6 consecutive transmembrane segments (helical) span residues 8-28 (LLNGNYILLLFVVLALGLCLG), 37-57 (LGNAIGVLVVSLLLGQQHFAI), 66-86 (FMLFIFCVGVEAGPNFFSIFF), 94-114 (MLALVMVGSAMILALGLGKLF), 118-138 (IGLTAGMLAGSMTSTPVLVGA), and 158-178 (NLSLGYALTYLIGLVSLILGA). 2 RCK C-terminal domains span residues 202 to 288 (LDTD…SFRN) and 290 to 373 (KEVF…KIGF). Helical transmembrane passes span 383–403 (LLAFCSFFILGLMIGLITFQF), 406–426 (FSFGIGNAAGLLLAGIMLGFL), 447–467 (FGLMVFMAGVGLSAGGGINSS), 475–495 (MLISGLIVSLVPVVICFVFGA), and 541–561 (IANVLLTLAGSLIVILWPGIL).

This sequence belongs to the AAE transporter (TC 2.A.81) family. YbjL subfamily.

Its subcellular location is the cell membrane. This is Putative transport protein YPA_0617 from Yersinia pestis bv. Antiqua (strain Antiqua).